A 27-amino-acid polypeptide reads, in one-letter code: Protamine-B (27 aa).

The tract at residues Ala-1 to Arg-27 is disordered.

In terms of tissue distribution, testis.

The protein resides in the nucleus. It localises to the chromosome. Protamines substitute for histones in the chromatin of sperm during the haploid phase of spermatogenesis. They compact sperm DNA into a highly condensed, stable and inactive complex. This chain is Protamine-B, found in Acipenser stellatus (Sevruga).